A 124-amino-acid chain; its full sequence is Large ribosomal subunit protein eL22y (124 aa).

The protein belongs to the eukaryotic ribosomal protein eL22 family.

This is Large ribosomal subunit protein eL22y (RPL22C) from Arabidopsis thaliana (Mouse-ear cress).